The primary structure comprises 186 residues: ADP-ribosylation factor-like protein 6 (186 aa).

G2 carries the N-myristoyl glycine lipid modification. Residues 24–31 (GLDNSGKT), T50, 69–73 (DMSGQ), G72, 130–133 (NKMD), and A164 each bind GTP. Residues T31 and T50 each coordinate Mg(2+).

Belongs to the small GTPase superfamily. Arf family. As to quaternary structure, interacts with SEC61B, ARL6IP1, ARL6IP2, ARL6IP3, ARL6IP4 ARL6IP5 and ARL6IP6. Interacts (GTP-bound form) with the BBSome a complex that contains BBS1, BBS2, BBS4, BBS5, BBS7, BBS8/TTC8, BBS9 and BBIP10. Interacts (GTP-free form) with IFT27.

The protein localises to the cell projection. It is found in the cilium membrane. It localises to the cytoplasm. Its subcellular location is the cytoskeleton. The protein resides in the cilium axoneme. The protein localises to the cilium basal body. Its function is as follows. Involved in membrane protein trafficking at the base of the ciliary organelle. Mediates recruitment onto plasma membrane of the BBSome complex which would constitute a coat complex required for sorting of specific membrane proteins to the primary cilia. Together with BBS1, is necessary for correct trafficking of PKD1 to primary cilia. Together with the BBSome complex and LTZL1, controls SMO ciliary trafficking and contributes to the sonic hedgehog (SHH) pathway regulation. May regulate cilia assembly and disassembly and subsequent ciliary signaling events such as the Wnt signaling cascade. Isoform 2 may be required for proper retinal function and organization. This is ADP-ribosylation factor-like protein 6 (ARL6) from Homo sapiens (Human).